The following is a 1245-amino-acid chain: TAL effector protein Brg11 (1245 aa).

Disordered stretches follow at residues 1–87 (MRIG…LVPE) and 173–205 (CPQAFASPPRAPRSARARRARTGGDAWPAPTFL). The span at 67 to 87 (PRRPLPVAPASAPPAPSLVPE) shows a compositional bias: pro residues. Residues 185–191 (RSARARR) carry the Nuclear localization signal 1 motif. One copy of the Cryptic repeat -1 repeat lies at 286-320 (LTRAHIVDIARQRSGDLALQALLPVATALTAAPLR). The Cryptic repeat 0 repeat unit spans residues 321–354 (LSASQIATVAQYGERPAIQALYRLRRKLTRAPLH). 16 Core repeat repeats span residues 355–389 (LTPQQVVAIASNTGGKRALEAVCVQLPVLRAAPYR), 390–424 (LSTEQVVAIASNKGGKQALEAVKAHLLDLLGAPYV), 425–459 (LDTEQVVAIASHNGGKQALEAVKADLLDLRGAPYA), 460–494 (LSTEQVVAIASHNGGKQALEAVKADLLELRGAPYA), 495–529 (LSTEQVVAIASHNGGKQALEAVKAHLLDLRGVPYA), 530–564 (LSTEQVVAIASHNGGKQALEAVKAQLLDLRGAPYA), 565–599 (LSTAQVVAIASNGGGKQALEGIGEQLLKLRTAPYG), 600–634 (LSTEQVVAIASHDGGKQALEAVGAQLVALRAAPYA), 635–669 (LSTEQVVAIASNKGGKQALEAVKAQLLELRGAPYA), 670–704 (LSTAQVVAIASHDGGNQALEAVGTQLVALRAAPYA), 705–739 (LSTEQVVAIASHDGGKQALEAVGAQLVALRAAPYA), 740–774 (LNTEQVVAIASSHGGKQALEAVRALFPDLRAAPYA), 775–809 (LSTAQLVAIASNPGGKQALEAVRALFRELRAAPYA), 810–844 (LSTEQVVAIASNHGGKQALEAVRALFRGLRAAPYG), 845–879 (LSTAQVVAIASSNGGKQALEAVWALLPVLRATPYD), and 880–914 (LNTAQIVAIASHDGGKPALEAVWAKLPVLRGAPYA). Residues 915–948 (LSTAQVVAIACISGQQALEAIEAHMPTLRQASHS) form a Cryptic repeat +1 repeat. The Cryptic repeat +2 repeat unit spans residues 949–982 (LSPERVAAIACIGGRSAVEAVRQGLPVKAIRRIR). 3 short sequence motifs (nuclear localization signal) span residues 980-983 (RIRR), 1108-1111 (HRKR), and 1145-1148 (RRKR). The tract at residues 1096 to 1138 (SPGMAGQSACSPHRKRPAETAIAPRSIRRSPNNAGQPSEPWPD) is disordered. The tract at residues 1237–1245 (DWLLQILET) is activation domain.

It belongs to the transcription activator-like effector (TALE) family. RipTAL/RTL subfamily.

It is found in the secreted. The protein localises to the host nucleus. Its function is as follows. Exported into plant cells, where it is targeted to the nucleus and probably acts as a transcription factor. Binds DNA in a sequence-specific manner. May contribute to plant pathogenicity. The polypeptide is TAL effector protein Brg11 (Ralstonia nicotianae (strain ATCC BAA-1114 / GMI1000) (Ralstonia solanacearum)).